The sequence spans 390 residues: Succinate--CoA ligase [ADP-forming] subunit beta (390 aa).

The ATP-grasp domain occupies 9 to 245 (KHLLKKYNIP…TTQEDEHETM (237 aa)). Residues Lys-46, 53–55 (GRG), Glu-99, Ser-102, and Glu-107 each bind ATP. Mg(2+)-binding residues include Asn-200 and Asp-214. Residues Asn-265 and 322–324 (GIV) each bind substrate.

The protein belongs to the succinate/malate CoA ligase beta subunit family. Heterotetramer of two alpha and two beta subunits. Requires Mg(2+) as cofactor.

It carries out the reaction succinate + ATP + CoA = succinyl-CoA + ADP + phosphate. The catalysed reaction is GTP + succinate + CoA = succinyl-CoA + GDP + phosphate. Its pathway is carbohydrate metabolism; tricarboxylic acid cycle; succinate from succinyl-CoA (ligase route): step 1/1. Its function is as follows. Succinyl-CoA synthetase functions in the citric acid cycle (TCA), coupling the hydrolysis of succinyl-CoA to the synthesis of either ATP or GTP and thus represents the only step of substrate-level phosphorylation in the TCA. The beta subunit provides nucleotide specificity of the enzyme and binds the substrate succinate, while the binding sites for coenzyme A and phosphate are found in the alpha subunit. The chain is Succinate--CoA ligase [ADP-forming] subunit beta from Coxiella burnetii (strain CbuK_Q154) (Coxiella burnetii (strain Q154)).